A 154-amino-acid polypeptide reads, in one-letter code: Aspartate carbamoyltransferase regulatory chain (154 aa).

C109, C114, C138, and C141 together coordinate Zn(2+).

Belongs to the PyrI family. Contains catalytic and regulatory chains. Requires Zn(2+) as cofactor.

Involved in allosteric regulation of aspartate carbamoyltransferase. The protein is Aspartate carbamoyltransferase regulatory chain of Aeromonas hydrophila subsp. hydrophila (strain ATCC 7966 / DSM 30187 / BCRC 13018 / CCUG 14551 / JCM 1027 / KCTC 2358 / NCIMB 9240 / NCTC 8049).